A 105-amino-acid chain; its full sequence is Thioredoxin (105 aa).

In terms of domain architecture, Thioredoxin spans 2–105 (VKQIESKSAF…KLEATINELL (104 aa)). The residue at position 3 (Lys3) is an N6-acetyllysine. Residue Lys8 is modified to N6-succinyllysine. Catalysis depends on nucleophile residues Cys32 and Cys35. Cys32 and Cys35 are oxidised to a cystine. Position 39 is an N6-acetyllysine (Lys39). An S-nitrosocysteine mark is found at Cys62 and Cys69. Cys73 carries the S-nitrosocysteine; alternate modification. Lys94 carries the N6-acetyllysine; alternate modification. Position 94 is an N6-succinyllysine; alternate (Lys94).

This sequence belongs to the thioredoxin family. As to quaternary structure, homodimer; disulfide-linked. Interacts with TXNIP through the redox-active site. Interacts with MAP3K5 and CASP3. Interacts with APEX1; the interaction stimulates the FOS/JUN AP-1 DNA-binding activity in a redox-dependent manner. In terms of processing, in the fully reduced protein, both Cys-69 and Cys-73 are nitrosylated in response to nitric oxide (NO). When two disulfide bonds are present in the protein, only Cys-73 is nitrosylated. Cys-73 can serve as donor for nitrosylation of target proteins.

The protein localises to the nucleus. It localises to the cytoplasm. The protein resides in the secreted. Functionally, participates in various redox reactions through the reversible oxidation of its active center dithiol to a disulfide and catalyzes dithiol-disulfide exchange reactions. Plays a role in the reversible S-nitrosylation of cysteine residues in target proteins, and thereby contributes to the response to intracellular nitric oxide. Nitrosylates the active site Cys of CASP3 in response to nitric oxide (NO), and thereby inhibits caspase-3 activity. Induces the FOS/JUN AP-1 DNA binding activity in ionizing radiation (IR) cells through its oxidation/reduction status and stimulates AP-1 transcriptional activity. This Oryctolagus cuniculus (Rabbit) protein is Thioredoxin (TXN).